Here is a 103-residue protein sequence, read N- to C-terminus: UPF0145 protein BCE_5284 (103 aa).

It belongs to the UPF0145 family.

In Bacillus cereus (strain ATCC 10987 / NRS 248), this protein is UPF0145 protein BCE_5284.